The primary structure comprises 274 residues: Methionine aminopeptidase B (274 aa).

His-102 lines the substrate pocket. The a divalent metal cation site is built by Asp-120, Asp-131, and His-194. His-201 lines the substrate pocket. 2 residues coordinate a divalent metal cation: Glu-227 and Glu-258.

Belongs to the peptidase M24A family. Methionine aminopeptidase type 1 subfamily. In terms of assembly, monomer. Co(2+) is required as a cofactor. It depends on Zn(2+) as a cofactor. The cofactor is Mn(2+). Fe(2+) serves as cofactor.

The enzyme catalyses Release of N-terminal amino acids, preferentially methionine, from peptides and arylamides.. Removes the N-terminal methionine from nascent proteins. The N-terminal methionine is often cleaved when the second residue in the primary sequence is small and uncharged (Met-Ala-, Cys, Gly, Pro, Ser, Thr, or Val). Requires deformylation of the N(alpha)-formylated initiator methionine before it can be hydrolyzed. This Synechocystis sp. (strain ATCC 27184 / PCC 6803 / Kazusa) protein is Methionine aminopeptidase B.